Reading from the N-terminus, the 150-residue chain is Large ribosomal subunit protein bL9 (150 aa).

It belongs to the bacterial ribosomal protein bL9 family.

Binds to the 23S rRNA. The protein is Large ribosomal subunit protein bL9 of Mycoplasma genitalium (strain ATCC 33530 / DSM 19775 / NCTC 10195 / G37) (Mycoplasmoides genitalium).